A 71-amino-acid chain; its full sequence is Biotinylated protein TB7.3 homolog (71 aa).

Residues 2-71 (AEDVRAEIVA…QAGDLIAVIS (70 aa)) enclose the Biotinyl-binding domain. Position 37 is an N6-biotinyllysine (Lys37).

The chain is Biotinylated protein TB7.3 homolog from Mycobacterium leprae (strain TN).